The following is a 732-amino-acid chain: Serine/threonine-protein kinase CBK1 (732 aa).

Positions 111-240 are disordered; that stretch reads SFDNHLNVDP…STEAANSDMT (130 aa). Residues 119–159 show a composition bias toward polar residues; sequence DPNNTERFTSMDSMNFQPPASTFTQLGNGSSTNLSEISSGQ. A compositionally biased stretch (low complexity) spans 160–171; that stretch reads NSLLSNHSVNNL. Over residues 172-183 the composition is skewed to polar residues; it reads PTALTSDTSPPV. Positions 185 to 221 are enriched in low complexity; that stretch reads QHPQFQPQQQQQQQQPQQQQIFQQQQQQQQQQQQPQQ. A compositionally biased stretch (polar residues) spans 222–240; the sequence is SRAVVNQSVSTEAANSDMT. The stretch at 281-310 forms a coiled coil; sequence HAIERNQRRLELENKIANEDIGSSEERKNR. The region spanning 335 to 647 is the Protein kinase domain; it reads FHTVKVIGKG…AEEIKQHPFF (313 aa). Residues 341-349 and Lys-364 each bind ATP; that span reads IGKGAFGEV. Asp-458 acts as the Proton acceptor in catalysis. In terms of domain architecture, AGC-kinase C-terminal spans 648–730; sequence RGVDWDSIRD…SRFDYLTRKN (83 aa).

The protein belongs to the protein kinase superfamily. STE Ser/Thr protein kinase family. COT1 subfamily. As to quaternary structure, interacts with MOB2 and BCR1.

It localises to the bud neck. Its subcellular location is the cell tip. It catalyses the reaction L-seryl-[protein] + ATP = O-phospho-L-seryl-[protein] + ADP + H(+). The enzyme catalyses L-threonyl-[protein] + ATP = O-phospho-L-threonyl-[protein] + ADP + H(+). Its function is as follows. Serine/threonine-protein kinase required for wild-type hyphal growth and transcriptional regulation of cell-wall-associated genes. Involved in the biofilm formation through phosphorylation of the master regulator of biofilm formation BCR1. The protein is Serine/threonine-protein kinase CBK1 (CBK1) of Candida albicans (strain SC5314 / ATCC MYA-2876) (Yeast).